A 298-amino-acid polypeptide reads, in one-letter code: ADP/ATP translocase 2 (298 aa).

Met-1 is subject to N-acetylmethionine. Residues 1–7 are Mitochondrial intermembrane-facing; that stretch reads MTDAAVS. Thr-2 carries the N-acetylthreonine; in ADP/ATP translocase 2, N-terminally processed modification. The Solcar 1 repeat unit spans residues 6 to 98; it reads VSFAKDFLAG…FAFKDKYKQI (93 aa). Ser-7 is modified (phosphoserine). A helical transmembrane segment spans residues 8 to 37; the sequence is FAKDFLAGGVAAAISKTAVAPIERVKLLLQ. N6-malonyllysine is present on Lys-23. Over 38-74 the chain is Mitochondrial matrix; sequence VQHASKQITADKQYKGIMDCVVRIPKEQGVLSFWRGN. At Lys-43 the chain carries N6-succinyllysine. The residue at position 52 (Lys-52) is an N6,N6,N6-trimethyllysine; alternate. At Lys-52 the chain carries N6,N6-dimethyllysine; alternate. The residue at position 52 (Lys-52) is an N6-methyllysine; alternate. Residues 75–99 form a helical membrane-spanning segment; sequence LANVIRYFPTQALNFAFKDKYKQIF. Positions 80 and 92 each coordinate ADP. Residues Lys-92 and Lys-96 each carry the N6-malonyllysine modification. The Mitochondrial intermembrane portion of the chain corresponds to 100–109; it reads LGGVDKRTQF. At Lys-105 the chain carries N6-acetyllysine; alternate. Lys-105 carries the N6-succinyllysine; alternate modification. The chain crosses the membrane as a helical span at residues 110–130; that stretch reads WRYFAGNLASGGAAGATSLCF. Solcar repeat units follow at residues 111–201 and 212–297; these read RYFA…AKGM and ISWM…IKKY. At 131–178 the chain is on the mitochondrial matrix side; sequence VYPLDFARTRLAADVGKAGDAREFKGLGDCLVKITKSDGIRGLYQGFN. The residue at position 147 (Lys-147) is an N6-methyllysine; alternate. N6-acetyllysine; alternate is present on residues Lys-147 and Lys-155. N6-succinyllysine; alternate occurs at positions 147 and 155. Lys-147 is modified (N6-malonyllysine; alternate). An N6-acetyllysine mark is found at Lys-163 and Lys-166. The chain crosses the membrane as a helical span at residues 179-199; it reads VSVQGIIIYRAAYFGIYDTAK. Over 200–210 the chain is Mitochondrial intermembrane; the sequence is GMLPDPKNTHI. Residues 211–231 form a helical membrane-spanning segment; that stretch reads FISWMIAQSVTAVAGLTSYPF. The Mitochondrial matrix segment spans residues 232 to 273; sequence DTVRRRMMMQSGRKGSDIMYTGTIDCWKKIARDEGSKAFFKG. Arg-235 contacts ADP. Positions 235–240 are important for transport activity; that stretch reads RRRMMM. The Nucleotide carrier signature motif signature appears at 235–240; it reads RRRMMM. Lys-268 carries the post-translational modification N6-acetyllysine; alternate. Residue Lys-268 is modified to N6-succinyllysine; alternate. A helical transmembrane segment spans residues 274–291; the sequence is AWSNVLRGMGGAFVLVLY. Residues 292–298 are Mitochondrial intermembrane-facing; it reads DEIKKYT.

Belongs to the mitochondrial carrier (TC 2.A.29) family. In terms of assembly, monomer. Component of the MMXD complex, which includes CIAO1, ERCC2, CIAO2B, MMS19 and SLC25A5/ANT2. Interacts with AK4. Interacts with TIMM44; leading to inhibit the presequence translocase TIMM23, thereby promoting stabilization of PINK1. Post-translationally, trimethylated by ANTKMT at Lys-52.

The protein resides in the mitochondrion inner membrane. The protein localises to the membrane. The catalysed reaction is ADP(in) + ATP(out) = ADP(out) + ATP(in). The enzyme catalyses H(+)(in) = H(+)(out). Its activity is regulated as follows. The matrix-open state (m-state) is inhibited by the membrane-permeable bongkrekic acid (BKA). The cytoplasmic-open state (c-state) is inhibited by the membrane-impermeable toxic inhibitor carboxyatractyloside (CATR). Proton transporter activity is inhibited by ADP:ATP antiporter activity. Its function is as follows. ADP:ATP antiporter that mediates import of ADP into the mitochondrial matrix for ATP synthesis, and export of ATP out to fuel the cell. Cycles between the cytoplasmic-open state (c-state) and the matrix-open state (m-state): operates by the alternating access mechanism with a single substrate-binding site intermittently exposed to either the cytosolic (c-state) or matrix (m-state) side of the inner mitochondrial membrane. In addition to its ADP:ATP antiporter activity, also involved in mitochondrial uncoupling and mitochondrial permeability transition pore (mPTP) activity. Plays a role in mitochondrial uncoupling by acting as a proton transporter: proton transport uncouples the proton flows via the electron transport chain and ATP synthase to reduce the efficiency of ATP production and cause mitochondrial thermogenesis. Proton transporter activity is inhibited by ADP:ATP antiporter activity, suggesting that SLC25A5/ANT2 acts as a master regulator of mitochondrial energy output by maintaining a delicate balance between ATP production (ADP:ATP antiporter activity) and thermogenesis (proton transporter activity). Proton transporter activity requires free fatty acids as cofactor, but does not transport it. Probably mediates mitochondrial uncoupling in tissues that do not express UCP1. Also plays a key role in mPTP opening, a non-specific pore that enables free passage of the mitochondrial membranes to solutes of up to 1.5 kDa, and which contributes to cell death. It is however unclear if SLC25A5/ANT2 constitutes a pore-forming component of mPTP or regulates it. Acts as a regulator of mitophagy independently of ADP:ATP antiporter activity: promotes mitophagy via interaction with TIMM44, leading to inhibit the presequence translocase TIMM23, thereby promoting stabilization of PINK1. As part of the mitotic spindle-associated MMXD complex it may play a role in chromosome segregation. This Tachyglossus aculeatus aculeatus (Southeast Australian short-beaked echidna) protein is ADP/ATP translocase 2.